A 248-amino-acid chain; its full sequence is Large ribosomal subunit protein uL2 (248 aa).

Residues 203 to 248 (AHPAGGGHHPKGLTPAPRNAPPGRKVGHIAPRRTGRKKGASRTPTQ) are disordered. Over residues 227–242 (KVGHIAPRRTGRKKGA) the composition is skewed to basic residues.

This sequence belongs to the universal ribosomal protein uL2 family. Part of the 50S ribosomal subunit. Forms a bridge to the 30S subunit in the 70S ribosome.

One of the primary rRNA binding proteins. Required for association of the 30S and 50S subunits to form the 70S ribosome, for tRNA binding and peptide bond formation. It has been suggested to have peptidyltransferase activity; this is somewhat controversial. Makes several contacts with the 16S rRNA in the 70S ribosome. The sequence is that of Large ribosomal subunit protein uL2 from Thermofilum pendens (strain DSM 2475 / Hrk 5).